The primary structure comprises 320 residues: Flavonol 4'-sulfotransferase (320 aa).

69–74 contributes to the 3'-phosphoadenylyl sulfate binding site; sequence KSGTTW. His-129 (proton acceptor) is an active-site residue. Residues Arg-151, Ser-159, Tyr-217, and 285–287 each bind 3'-phosphoadenylyl sulfate; that span reads RKA.

The protein belongs to the sulfotransferase 1 family. Highest in shoot tips and lowest in mature leaves and roots.

It localises to the cytoplasm. It carries out the reaction quercetin 3-sulfate + 3'-phosphoadenylyl sulfate = quercetin 3,4'-bissulfate + adenosine 3',5'-bisphosphate + H(+). With respect to regulation, no requirement for divalent cations and insensitive to p-chloromercuribenzoate, iodoacetate, or iodoacetamide. In terms of biological role, sulfotransferase that utilizes 3'-phospho-5'-adenylyl sulfate (PAPS) as sulfonate donor to catalyze the sulfate conjugation of quercetin 3-sulfate &gt; kaempferol 3-sulfate &gt; isorhamnetin 3-sulfate &gt; patuletin 3-sulfate, but not tamarixetin 3-sulfate. O-sulfation of position 4' of flavonol. May play a role in auxin transport. This chain is Flavonol 4'-sulfotransferase, found in Flaveria chlorifolia (Clasping yellowtops).